Reading from the N-terminus, the 634-residue chain is 1-deoxy-D-xylulose-5-phosphate synthase (634 aa).

Thiamine diphosphate is bound by residues His74 and 115 to 117 (AHS). Asp146 contributes to the Mg(2+) binding site. Residues 147–148 (GA), Asn176, Tyr283, and Glu365 contribute to the thiamine diphosphate site. Residue Asn176 participates in Mg(2+) binding.

It belongs to the transketolase family. DXPS subfamily. Homodimer. Requires Mg(2+) as cofactor. Thiamine diphosphate serves as cofactor.

It carries out the reaction D-glyceraldehyde 3-phosphate + pyruvate + H(+) = 1-deoxy-D-xylulose 5-phosphate + CO2. Its pathway is metabolic intermediate biosynthesis; 1-deoxy-D-xylulose 5-phosphate biosynthesis; 1-deoxy-D-xylulose 5-phosphate from D-glyceraldehyde 3-phosphate and pyruvate: step 1/1. Its function is as follows. Catalyzes the acyloin condensation reaction between C atoms 2 and 3 of pyruvate and glyceraldehyde 3-phosphate to yield 1-deoxy-D-xylulose-5-phosphate (DXP). This Burkholderia ambifaria (strain MC40-6) protein is 1-deoxy-D-xylulose-5-phosphate synthase.